The sequence spans 728 residues: Peroxisome biogenesis protein 5 (728 aa).

Residues 1–58 (MAMRDLVNGGAACAVPGSSSSSNPLGALTNALLGSSSKTQERLKEIPNANRSGPRPQF) form a disordered region. Residues 11–97 (AACAVPGSSS…FRGFRSVDQN (87 aa)) are amphipathic helix 1 (AH1). Residue Cys-13 forms a Glycyl cysteine thioester (Cys-Gly) (interchain with G-Cter in ubiquitin) linkage. 3 consecutive repeat copies span residues 240-244 (WAAEF), 257-261 (WVQSF), and 270-274 (WATEF). 3 consecutive short sequence motifs (wxxxF/Y motif) follow at residues 240-244 (WAAEF), 257-261 (WVQSF), and 270-274 (WATEF). The amphipathic helix 3 (AH3) stretch occupies residues 288-311 (SMDMQNIAAMEQTRKLAHTLSQDG). Repeat copies occupy residues 348-352 (WATEY), 362-366 (WADQF), 378-382 (WADEF), 396-400 (WVNEF), 408-412 (WIDEF), and 425-429 (WANAY). 6 short sequence motifs (wxxxF/Y motif) span residues 348–352 (WATEY), 362–366 (WADQF), 378–382 (WADEF), 396–400 (WVNEF), 408–412 (WIDEF), and 425–429 (WANAY). Residues 392-417 (AEDQWVNEFSKLNVDDWIDEFAEGPV) form an amphipathic helix 4 (AH4) region. TPR repeat units lie at residues 491–524 (AEGW…DPTN), 590–623 (ADVH…KPND), 625–657 (SLWN…KPNY), and 658–691 (VRAW…NPKA).

This sequence belongs to the peroxisomal targeting signal receptor family. In terms of assembly, interacts (via WxxxF/Y and LVxEF motifs) with PEX14; promoting translocation through the PEX13-PEX14 docking complex. Interacts with PEX7, promoting peroxisomal import of proteins containing a C-terminal PTS2-type peroxisomal targeting signal. Interacts with LACS7. Post-translationally, monoubiquitinated at Cys-13 by PEX2 during PEX5 passage through the retrotranslocation channel. Cys-13 monoubiquitination acts as a recognition signal for the PEX1-PEX6 complex and is required for PEX5 extraction and export from peroxisomes. When PEX5 recycling is compromised, polyubiquitinated by PEX10 during its passage through the retrotranslocation channel, leading to its degradation. Expressed in flowers, siliques, leaves and roots.

It localises to the cytoplasm. The protein resides in the cytosol. It is found in the peroxisome matrix. Functionally, receptor that mediates peroxisomal import of proteins containing a C-terminal PTS1-type tripeptide peroxisomal targeting signal (SKL-type). Binds to cargo proteins containing a PTS1 peroxisomal targeting signal in the cytosol, and translocates them into the peroxisome matrix by passing through the PEX13-PEX14 docking complex along with cargo proteins. PEX5 receptor is then retrotranslocated into the cytosol, leading to release of bound cargo in the peroxisome matrix, and reset for a subsequent peroxisome import cycle. In addition to promoting peroxisomal translocation of proteins containing a PTS1 peroxisomal targeting signal, mediates peroxisomal import of proteins containing a C-terminal PTS2-type peroxisomal targeting signal via its interaction with PEX7. Interaction with PEX7 only takes place when PEX7 is associated with cargo proteins containing a PTS2 peroxisomal targeting signal. PEX7 along with PTS2-containing cargo proteins are then translocated through the PEX13-PEX14 docking complex together with PEX5. Necessary for the developmental elimination of obsolete peroxisome matrix proteins. The polypeptide is Peroxisome biogenesis protein 5 (PEX5) (Arabidopsis thaliana (Mouse-ear cress)).